Reading from the N-terminus, the 293-residue chain is Phosphatidylglycerol--prolipoprotein diacylglyceryl transferase (293 aa).

Transmembrane regions (helical) follow at residues 4–24, 45–65, 81–101, and 115–135; these read ILAF…LFIF, FELR…YFVA, ELIF…YVLF, and IWEG…TGFL. Residue Arg-165 coordinates a 1,2-diacyl-sn-glycero-3-phospho-(1'-sn-glycerol). A run of 3 helical transmembrane segments spans residues 204–224, 231–249, and 262–282; these read PTFL…SVYF, HGEV…RIVI, and IKAA…GFLI.

It belongs to the Lgt family.

Its subcellular location is the cell inner membrane. The catalysed reaction is L-cysteinyl-[prolipoprotein] + a 1,2-diacyl-sn-glycero-3-phospho-(1'-sn-glycerol) = an S-1,2-diacyl-sn-glyceryl-L-cysteinyl-[prolipoprotein] + sn-glycerol 1-phosphate + H(+). The protein operates within protein modification; lipoprotein biosynthesis (diacylglyceryl transfer). Functionally, catalyzes the transfer of the diacylglyceryl group from phosphatidylglycerol to the sulfhydryl group of the N-terminal cysteine of a prolipoprotein, the first step in the formation of mature lipoproteins. The protein is Phosphatidylglycerol--prolipoprotein diacylglyceryl transferase of Thermotoga petrophila (strain ATCC BAA-488 / DSM 13995 / JCM 10881 / RKU-1).